The chain runs to 702 residues: K(+)-insensitive pyrophosphate-energized proton pump (702 aa).

Transmembrane regions (helical) follow at residues 3 to 23, 63 to 83, 130 to 150, and 162 to 182; these read GIYLFVVAAALAALGYGALTI, AVVFVILTALLGISVGFGFLI, MLVAGLALLSVAFYYILLVGI, and VALGFGASLISIFARLGGGIF. A substrate-binding site is contributed by lysine 184. The Mg(2+) site is built by aspartate 187, aspartate 191, asparagine 214, and aspartate 217. 6 consecutive transmembrane segments (helical) span residues 234–254, 255–275, 294–314, 329–349, 379–399, and 407–427; these read AVTVVATMVLASIFFAGVPAM, TSMMAYPLAIGGVCILASILG, GFLVSAGASFVGIILATAIVP, GFDLFLCAVIGLLVTGLLIWV, GLAISMEATALPALIICAAII, and LFGIAITVTSMLALAGMVVAL. Aspartate 435 is a Mg(2+) binding site. Helical transmembrane passes span 466-486, 517-537, 586-606, and 612-632; these read AVTKGYAIGSAGLGALVLFAA, YVVVGLFIGGLLPYLFGSMGM, IIPSLLPVLAPIVLYFVILGI, and AFSALGAMLLGVIVTGLFVAI. Residues aspartate 642, aspartate 668, and aspartate 672 each coordinate Ca(2+). Substrate is bound at residue lysine 675.

This sequence belongs to the H(+)-translocating pyrophosphatase (TC 3.A.10) family. K(+)-insensitive subfamily. Homodimer. It depends on Mg(2+) as a cofactor.

It is found in the cell inner membrane. The catalysed reaction is diphosphate + H2O + H(+)(in) = 2 phosphate + 2 H(+)(out). Its function is as follows. Proton pump that utilizes the energy of pyrophosphate hydrolysis as the driving force for proton movement across the membrane. Generates a proton motive force. The chain is K(+)-insensitive pyrophosphate-energized proton pump from Rhodospirillum rubrum (strain ATCC 11170 / ATH 1.1.1 / DSM 467 / LMG 4362 / NCIMB 8255 / S1).